Consider the following 141-residue polypeptide: Hemoglobin subunit alpha-1/2 (141 aa).

Positions 1-141 (VLSPADKANV…VGTVLTSKYR (141 aa)) constitute a Globin domain. A Phosphoserine modification is found at Ser-3. Lys-7 and Lys-11 each carry N6-succinyllysine. An N6-acetyllysine; alternate modification is found at Lys-16. Lys-16 bears the N6-succinyllysine; alternate mark. Tyr-24 bears the Phosphotyrosine mark. Ser-35 is modified (phosphoserine). Lys-40 carries the post-translational modification N6-succinyllysine. Ser-49 is modified (phosphoserine). His-58 contributes to the O2 binding site. Residue His-87 participates in heme b binding. Ser-102 carries the post-translational modification Phosphoserine. A Phosphothreonine modification is found at Thr-108. Ser-124 and Ser-131 each carry phosphoserine. Residues Thr-134 and Thr-137 each carry the phosphothreonine modification. Ser-138 carries the post-translational modification Phosphoserine.

This sequence belongs to the globin family. As to quaternary structure, heterotetramer of two alpha chains and two beta chains. Red blood cells.

Involved in oxygen transport from the lung to the various peripheral tissues. The protein is Hemoglobin subunit alpha-1/2 of Macroderma gigas (Australian ghost bat).